Consider the following 267-residue polypeptide: Ribosomal RNA small subunit methyltransferase A (267 aa).

The S-adenosyl-L-methionine site is built by Asn-18, Leu-20, Gly-45, Glu-66, Asp-91, and Asn-112.

It belongs to the class I-like SAM-binding methyltransferase superfamily. rRNA adenine N(6)-methyltransferase family. RsmA subfamily.

It is found in the cytoplasm. The enzyme catalyses adenosine(1518)/adenosine(1519) in 16S rRNA + 4 S-adenosyl-L-methionine = N(6)-dimethyladenosine(1518)/N(6)-dimethyladenosine(1519) in 16S rRNA + 4 S-adenosyl-L-homocysteine + 4 H(+). In terms of biological role, specifically dimethylates two adjacent adenosines (A1518 and A1519) in the loop of a conserved hairpin near the 3'-end of 16S rRNA in the 30S particle. May play a critical role in biogenesis of 30S subunits. This is Ribosomal RNA small subunit methyltransferase A from Shewanella denitrificans (strain OS217 / ATCC BAA-1090 / DSM 15013).